Reading from the N-terminus, the 372-residue chain is Flagellar P-ring protein (372 aa).

The first 26 residues, 1-26 (MNLSSLSFRLLATLLGACVVVAPASA), serve as a signal peptide directing secretion.

Belongs to the FlgI family. In terms of assembly, the basal body constitutes a major portion of the flagellar organelle and consists of four rings (L,P,S, and M) mounted on a central rod.

The protein localises to the periplasm. Its subcellular location is the bacterial flagellum basal body. Assembles around the rod to form the L-ring and probably protects the motor/basal body from shearing forces during rotation. This is Flagellar P-ring protein from Xanthomonas oryzae pv. oryzae (strain MAFF 311018).